A 160-amino-acid polypeptide reads, in one-letter code: SsrA-binding protein (160 aa).

Belongs to the SmpB family.

It is found in the cytoplasm. Required for rescue of stalled ribosomes mediated by trans-translation. Binds to transfer-messenger RNA (tmRNA), required for stable association of tmRNA with ribosomes. tmRNA and SmpB together mimic tRNA shape, replacing the anticodon stem-loop with SmpB. tmRNA is encoded by the ssrA gene; the 2 termini fold to resemble tRNA(Ala) and it encodes a 'tag peptide', a short internal open reading frame. During trans-translation Ala-aminoacylated tmRNA acts like a tRNA, entering the A-site of stalled ribosomes, displacing the stalled mRNA. The ribosome then switches to translate the ORF on the tmRNA; the nascent peptide is terminated with the 'tag peptide' encoded by the tmRNA and targeted for degradation. The ribosome is freed to recommence translation, which seems to be the essential function of trans-translation. This Novosphingobium aromaticivorans (strain ATCC 700278 / DSM 12444 / CCUG 56034 / CIP 105152 / NBRC 16084 / F199) protein is SsrA-binding protein.